The primary structure comprises 520 residues: AAA-ATPase At5g57480 (520 aa).

The signal sequence occupies residues 1 to 24 (MKEYWTSLASLLGVLAFCQSLMQS). 244–251 (GPPGTGKS) lines the ATP pocket. Disordered stretches follow at residues 307 to 340 (KKNS…EEGG) and 467 to 520 (NVKD…TRED). The span at 328-340 (SGSGSGGSGEEGG) shows a compositional bias: gly residues. The segment covering 497–512 (QNEDEDHDEEEIELED) has biased composition (acidic residues).

It belongs to the AAA ATPase family. BCS1 subfamily. It depends on Mg(2+) as a cofactor.

It catalyses the reaction ATP + H2O = ADP + phosphate + H(+). This Arabidopsis thaliana (Mouse-ear cress) protein is AAA-ATPase At5g57480.